Here is a 199-residue protein sequence, read N- to C-terminus: Ribonuclease HII (199 aa).

One can recognise an RNase H type-2 domain in the interval 14–199; it reads GLLAGVDEAG…SFAPVAEVLR (186 aa). Residues aspartate 20, glutamate 21, and aspartate 112 each contribute to the a divalent metal cation site.

It belongs to the RNase HII family. Requires Mn(2+) as cofactor. It depends on Mg(2+) as a cofactor.

The protein resides in the cytoplasm. The catalysed reaction is Endonucleolytic cleavage to 5'-phosphomonoester.. In terms of biological role, endonuclease that specifically degrades the RNA of RNA-DNA hybrids. This Polaromonas sp. (strain JS666 / ATCC BAA-500) protein is Ribonuclease HII.